The sequence spans 955 residues: Isoleucine--tRNA ligase (955 aa).

The short motif at 58–68 is the 'HIGH' region element; that stretch reads IYANGDIHIGH. An L-isoleucyl-5'-AMP-binding site is contributed by Glu-552. The 'KMSKS' region signature appears at 593-597; the sequence is KMSKS. Lys-596 is a binding site for ATP. Residues Cys-918, Cys-921, Cys-938, and Cys-941 each coordinate Zn(2+).

It belongs to the class-I aminoacyl-tRNA synthetase family. IleS type 1 subfamily. Monomer. The cofactor is Zn(2+).

Its subcellular location is the cytoplasm. It carries out the reaction tRNA(Ile) + L-isoleucine + ATP = L-isoleucyl-tRNA(Ile) + AMP + diphosphate. In terms of biological role, catalyzes the attachment of isoleucine to tRNA(Ile). As IleRS can inadvertently accommodate and process structurally similar amino acids such as valine, to avoid such errors it has two additional distinct tRNA(Ile)-dependent editing activities. One activity is designated as 'pretransfer' editing and involves the hydrolysis of activated Val-AMP. The other activity is designated 'posttransfer' editing and involves deacylation of mischarged Val-tRNA(Ile). The sequence is that of Isoleucine--tRNA ligase from Vesicomyosocius okutanii subsp. Calyptogena okutanii (strain HA).